We begin with the raw amino-acid sequence, 90 residues long: Protein LURE 1.5 (90 aa).

An N-terminal signal peptide occupies residues 1-19 (MKLPIIFLTLLIFVSSCTS). 2 disulfides stabilise this stretch: C58-C75 and C61-C82.

It belongs to the DEFL family. As to expression, expressed in the pistil. Detected exclusively in the synergid cells.

The protein resides in the secreted. Functionally, inactive pollen tube attractants guiding pollen tubes to the ovular micropyle. The chain is Protein LURE 1.5 from Arabidopsis thaliana (Mouse-ear cress).